Reading from the N-terminus, the 698-residue chain is Polyphosphate kinase (698 aa).

An ATP-binding site is contributed by N63. Residues R390 and R420 each coordinate Mg(2+). The active-site Phosphohistidine intermediate is the H450. Y483, R579, and H607 together coordinate ATP.

Belongs to the polyphosphate kinase 1 (PPK1) family. Mg(2+) serves as cofactor. Post-translationally, an intermediate of this reaction is the autophosphorylated ppk in which a phosphate is covalently linked to a histidine residue through a N-P bond.

The enzyme catalyses [phosphate](n) + ATP = [phosphate](n+1) + ADP. Its function is as follows. Catalyzes the reversible transfer of the terminal phosphate of ATP to form a long-chain polyphosphate (polyP). This chain is Polyphosphate kinase, found in Xylella fastidiosa (strain Temecula1 / ATCC 700964).